A 663-amino-acid polypeptide reads, in one-letter code: Beta-galactosidase BgaH (663 aa).

Arg103 contacts substrate. Cys107 contacts Zn(2+). Asn141 contributes to the substrate binding site. Glu142 serves as the catalytic Proton donor. Zn(2+) is bound by residues Cys151, Cys153, and Cys156. The active-site Nucleophile is Glu311. Substrate-binding positions include Trp319 and 359 to 362 (EQYH).

This sequence belongs to the glycosyl hydrolase 42 family. As to quaternary structure, homodimer.

It catalyses the reaction Hydrolysis of terminal non-reducing beta-D-galactose residues in beta-D-galactosides.. Requires 4 M NaCl for maximal activity. Loss of activity if DTT or beta-mercaptoethanol is omitted from buffers. Addition of 5-20 mM EDTA, 1 mM Cu(2+) or 1 mM Zn(2+) results in loss of activity. Its function is as follows. When overexpressed, cleaves several different substrates including o-nitrophenyl-beta-D-galactopyranoside (ONPG), chromogen 5-bromo-4-chloro-3-indolyl-beta-D-galactopyranoside (X-Gal) and lactulose, but not lactose. Also has beta-D-fucosidase activity. No beta-L-fucosidase, beta-glucosidase, beta-arabinosidase or beta-xylosidase activity. The protein is Beta-galactosidase BgaH of Haloferax lucentense (strain DSM 14919 / JCM 9276 / NCIMB 13854 / Aa 2.2) (Haloferax alicantei).